The primary structure comprises 281 residues: Bis(5'-nucleosyl)-tetraphosphatase, symmetrical (281 aa).

Belongs to the Ap4A hydrolase family.

It catalyses the reaction P(1),P(4)-bis(5'-adenosyl) tetraphosphate + H2O = 2 ADP + 2 H(+). Hydrolyzes diadenosine 5',5'''-P1,P4-tetraphosphate to yield ADP. The sequence is that of Bis(5'-nucleosyl)-tetraphosphatase, symmetrical from Acidovorax sp. (strain JS42).